Here is a 48-residue protein sequence, read N- to C-terminus: M-oxotoxin-Ot1a (48 aa).

Expressed by the venom gland.

It localises to the secreted. Its subcellular location is the target cell membrane. Disrupts cell membranes, particularly those rich in phosphocholine, through formation of pores. Has antimicrobial activity against Gram-negative bacterium E.coli, Gram-positive bacteria B.subtilis and S.aureus, and hemolytic activity against sheep, pig and guinea pig erythrocytes. Has insecticidal activity against S.frugiperda ovarian cells by opening non-selective ion channels. Enhances the insecticidal activity of spider venom neurotoxic peptides. In Oxyopes takobius (Lynx spider), this protein is M-oxotoxin-Ot1a.